We begin with the raw amino-acid sequence, 749 residues long: Semaphorin-3B (749 aa).

Positions Met-1–Ala-24 are cleaved as a signal peptide. Residues Arg-30–Leu-513 form the Sema domain. A glycan (N-linked (GlcNAc...) asparagine) is linked at Asn-82. The cysteines at positions 102 and 113 are disulfide-linked. Residue Asn-124 is glycosylated (N-linked (GlcNAc...) asparagine). 3 disulfide bridges follow: Cys-131-Cys-140, Cys-269-Cys-380, and Cys-293-Cys-340. A glycan (N-linked (GlcNAc...) asparagine) is linked at Asn-427. Cystine bridges form between Cys-516-Cys-534 and Cys-644-Cys-710. In terms of domain architecture, Ig-like C2-type spans Pro-573–Ser-659. The interval Gly-702 to Trp-749 is disordered. Basic and acidic residues predominate over residues His-733–Pro-743.

It belongs to the semaphorin family. In terms of tissue distribution, expressed abundantly but differentially in a variety of neural and nonneural tissues.

Its subcellular location is the secreted. The protein localises to the endoplasmic reticulum. Functionally, inhibits axonal extension by providing local signals to specify territories inaccessible for growing axons. This is Semaphorin-3B (SEMA3B) from Homo sapiens (Human).